Reading from the N-terminus, the 782-residue chain is HHIP-like protein 1 (782 aa).

An N-terminal signal peptide occupies residues 1–19; that stretch reads MARARAGALLALWVLGAAA. 4 cysteine pairs are disulfide-bonded: Cys-181–Cys-521, Cys-185–Cys-528, Cys-399–Cys-417, and Cys-484–Cys-584. The N-linked (GlcNAc...) asparagine glycan is linked to Asn-234. A disordered region spans residues 604–666; the sequence is EKFIPKTRST…RRGRLNSASR (63 aa). The segment covering 610–623 has biased composition (low complexity); it reads TRSTPRPTARAPTR. Residues 632-642 show a composition bias toward pro residues; that stretch reads AAPPAPTPRPA. An SRCR domain is found at 673–776; that stretch reads VRLVRPAGLS…HDEDAGVVCS (104 aa). Cystine bridges form between Cys-700–Cys-765, Cys-713–Cys-775, and Cys-745–Cys-755.

This sequence belongs to the HHIP family.

The protein localises to the secreted. This chain is HHIP-like protein 1 (HHIPL1), found in Homo sapiens (Human).